The following is a 64-amino-acid chain: MPKMKSHRGACKRFKKTASGRVKREKMYGSHNLEKKNRKRTRRIHQSTLVDKTQEKQIKRMILA.

The tract at residues 20-42 (GRVKREKMYGSHNLEKKNRKRTR) is disordered. A compositionally biased stretch (basic and acidic residues) spans 25 to 35 (EKMYGSHNLEK).

This sequence belongs to the bacterial ribosomal protein bL35 family.

The sequence is that of Large ribosomal subunit protein bL35 from Chlorobium phaeobacteroides (strain BS1).